The chain runs to 103 residues: L-rhamnose mutarotase (103 aa).

Y18 is a substrate binding site. The Proton donor role is filled by H22. Substrate contacts are provided by residues Y41 and W76–W77.

This sequence belongs to the rhamnose mutarotase family. Homodimer.

The protein localises to the cytoplasm. The enzyme catalyses alpha-L-rhamnose = beta-L-rhamnose. It participates in carbohydrate metabolism; L-rhamnose metabolism. Its function is as follows. Involved in the anomeric conversion of L-rhamnose. This is L-rhamnose mutarotase from Enterococcus faecalis (strain ATCC 700802 / V583).